We begin with the raw amino-acid sequence, 347 residues long: Spermidine/putrescine import ATP-binding protein PotA (347 aa).

One can recognise an ABC transporter domain in the interval 6–238 (LEIKNLSHYY…PKTKFVADFI (233 aa)). 40–47 (GPSGCGKT) lines the ATP pocket.

It belongs to the ABC transporter superfamily. Spermidine/putrescine importer (TC 3.A.1.11.1) family. The complex is composed of two ATP-binding proteins (PotA), two transmembrane proteins (PotB and PotC) and a solute-binding protein (PotD).

The protein localises to the cell inner membrane. It catalyses the reaction ATP + H2O + polyamine-[polyamine-binding protein]Side 1 = ADP + phosphate + polyamineSide 2 + [polyamine-binding protein]Side 1.. In terms of biological role, part of the ABC transporter complex PotABCD involved in spermidine/putrescine import. Responsible for energy coupling to the transport system. This chain is Spermidine/putrescine import ATP-binding protein PotA, found in Borreliella afzelii (strain PKo) (Borrelia afzelii).